Here is a 312-residue protein sequence, read N- to C-terminus: 4-hydroxyproline 2-epimerase (312 aa).

The active-site Proton acceptor is C88. Residues 89–90 (GH), H208, and D234 each bind substrate. C238 functions as the Proton donor in the catalytic mechanism. 239-240 (GT) is a binding site for substrate.

The protein belongs to the proline racemase family.

It catalyses the reaction trans-4-hydroxy-L-proline = cis-4-hydroxy-D-proline. Its function is as follows. Catalyzes the epimerization of trans-4-hydroxy-L-proline (t4LHyp) to cis-4-hydroxy-D-proline (c4DHyp). Is likely involved in a degradation pathway that converts t4LHyp to alpha-ketoglutarate. Can also catalyze the epimerization of trans-3-hydroxy-L-proline (t3LHyp) to cis-3-hydroxy-D-proline (c3DHyp), albeit with 500-fold lower efficiency. Displays no proline racemase activity. This chain is 4-hydroxyproline 2-epimerase, found in Xanthomonas campestris pv. campestris (strain ATCC 33913 / DSM 3586 / NCPPB 528 / LMG 568 / P 25).